The sequence spans 1070 residues: DNA-directed RNA polymerase subunit beta (1070 aa).

This sequence belongs to the RNA polymerase beta chain family. In terms of assembly, in plastids the minimal PEP RNA polymerase catalytic core is composed of four subunits: alpha, beta, beta', and beta''. When a (nuclear-encoded) sigma factor is associated with the core the holoenzyme is formed, which can initiate transcription.

The protein localises to the plastid. The protein resides in the chloroplast. The enzyme catalyses RNA(n) + a ribonucleoside 5'-triphosphate = RNA(n+1) + diphosphate. In terms of biological role, DNA-dependent RNA polymerase catalyzes the transcription of DNA into RNA using the four ribonucleoside triphosphates as substrates. The protein is DNA-directed RNA polymerase subunit beta of Phalaenopsis aphrodite subsp. formosana (Moth orchid).